We begin with the raw amino-acid sequence, 201 residues long: Adenylyl-sulfate kinase (201 aa).

35 to 42 (GLSGSGKS) lines the ATP pocket. The active-site Phosphoserine intermediate is the Ser-109.

Belongs to the APS kinase family.

It catalyses the reaction adenosine 5'-phosphosulfate + ATP = 3'-phosphoadenylyl sulfate + ADP + H(+). The protein operates within sulfur metabolism; hydrogen sulfide biosynthesis; sulfite from sulfate: step 2/3. Functionally, catalyzes the synthesis of activated sulfate. In Salmonella gallinarum (strain 287/91 / NCTC 13346), this protein is Adenylyl-sulfate kinase.